A 417-amino-acid chain; its full sequence is Pre-mRNA-splicing factor RBM22 (417 aa).

The segment at 159–186 (RNRPHICSFWVKGECKRGEECPYRHEKP) adopts a C3H1-type zinc-finger fold. The RRM domain maps to 232–305 (TTLYVGGLGD…RRLNVKWGRS (74 aa)). Disordered regions lie at residues 303–348 (GRSQ…SANY) and 369–417 (GLSG…PSSG). Over residues 309–318 (RGKEREHDGS) the composition is skewed to basic and acidic residues. A compositionally biased stretch (pro residues) spans 369-391 (GLSGPPPGFGPHMFPPMAPPPFL).

It belongs to the SLT11 family. In terms of assembly, component of the pre-catalytic and catalytic spliceosome complexes. Component of the postcatalytic spliceosome P complex.

The protein resides in the nucleus. Its subcellular location is the cytoplasm. Required for pre-mRNA splicing as component of the activated spliceosome. Involved in the first step of pre-mRNA splicing. Binds directly to the internal stem-loop (ISL) domain of the U6 snRNA and to the pre-mRNA intron near the 5' splice site during the activation and catalytic phases of the spliceosome cycle. The sequence is that of Pre-mRNA-splicing factor RBM22 (rbm22) from Xenopus laevis (African clawed frog).